A 207-amino-acid chain; its full sequence is Large ribosomal subunit protein uL4 (207 aa).

The interval 48-89 (THKVKNRSEVSGGGRKPWRQKGTGRARQGSIRSPQWRGGGTV) is disordered.

The protein belongs to the universal ribosomal protein uL4 family. As to quaternary structure, part of the 50S ribosomal subunit.

In terms of biological role, one of the primary rRNA binding proteins, this protein initially binds near the 5'-end of the 23S rRNA. It is important during the early stages of 50S assembly. It makes multiple contacts with different domains of the 23S rRNA in the assembled 50S subunit and ribosome. Its function is as follows. Forms part of the polypeptide exit tunnel. In Bacillus cytotoxicus (strain DSM 22905 / CIP 110041 / 391-98 / NVH 391-98), this protein is Large ribosomal subunit protein uL4.